The primary structure comprises 214 residues: Large ribosomal subunit protein uL3 (214 aa).

An N5-methylglutamine modification is found at Gln-153.

Belongs to the universal ribosomal protein uL3 family. Part of the 50S ribosomal subunit. Forms a cluster with proteins L14 and L19. In terms of processing, methylated by PrmB.

One of the primary rRNA binding proteins, it binds directly near the 3'-end of the 23S rRNA, where it nucleates assembly of the 50S subunit. This Methylobacillus flagellatus (strain ATCC 51484 / DSM 6875 / VKM B-1610 / KT) protein is Large ribosomal subunit protein uL3.